A 618-amino-acid chain; its full sequence is DELLA protein SLN1 (618 aa).

A disordered region spans residues 1-36 (MKREYQDGGGSGGGGDEMGSSRDKMMVSSSEAGEGE). Over residues 7–17 (DGGGSGGGGDE) the composition is skewed to gly residues. The short motif at 39 to 43 (DELLA) is the DELLA motif element. Disordered stretches follow at residues 106-137 (LNAP…YFDL) and 159-197 (APAD…GAAR). Residues 108 to 118 (APPPPLPPAPP) show a composition bias toward pro residues. Composition is skewed to low complexity over residues 119-128 (QLNASTSSTV) and 176-197 (TGGS…GAAR). In terms of domain architecture, GRAS spans 221–614 (VDTQEAGIRL…RPLIATSAWR (394 aa)). The interval 228 to 284 (IRLVHALLACAEAVQQENLSAAEALVKQIPLLAASQGGAMRKVAAYFGEALARRVFR) is leucine repeat I (LRI). Residues 235–239 (LACAE) carry the LxCxE motif motif. The VHIID stretch occupies residues 303 to 368 (HAHFYESCPY…GGPPSFRLTG (66 aa)). The VHIID signature appears at 334–338 (VHVVD). Residues 382–421 (QVGWKLAQFAHTIRVDFQYRGLVAATLADLEPFMLQPEGE) are leucine repeat II (LRII). The segment at 431 to 535 (IAVNSVFEMH…EVYLGRQICN (105 aa)) is PFYRE. Residues 538–614 (ACEGTERTER…RPLIATSAWR (77 aa)) form an SAW region.

The protein belongs to the GRAS family. DELLA subfamily. Phosphorylated. Post-translationally, ubiquitinated. Upon GA application it is ubiquitinated, leading to its subsequent degradation. As to expression, apparently restricted to regions where growth is occurring in the leaf blade. Localizes almost exclusively to the basal elongation zone (EZ) for the elongating blades of L1, L2 and L3. More detailed fractionation of the L3 blade shows that in cv. Himalaya, it is preferentially localized to the basal third of the EZ, but its presence can still be detected toward the end of the EZ (at protein level).

The protein resides in the nucleus. Probable transcriptional regulator that acts as a repressor of the gibberellin (GA) signaling pathway. Probably acts by participating in large multiprotein complexes that repress transcription of GA-inducible genes. Upon GA application, it is degraded by the proteasome, allowing the GA signaling pathway. Acts as a negative regulator of GAMYB gene expression. This Hordeum vulgare (Barley) protein is DELLA protein SLN1 (SLN1).